Here is a 363-residue protein sequence, read N- to C-terminus: 5-formaminoimidazole-4-carboxamide-1-(beta)-D-ribofuranosyl 5'-monophosphate synthetase (363 aa).

H29 and S96 together coordinate 5-amino-1-(5-phospho-beta-D-ribosyl)imidazole-4-carboxamide. The region spanning 118–354 is the ATP-grasp domain; that stretch reads RDILRWEAER…ISREIKNAIE (237 aa). Residues 148–210 and E232 each bind ATP; that span reads PEDI…TNFC. A 5-amino-1-(5-phospho-beta-D-ribosyl)imidazole-4-carboxamide-binding site is contributed by N260. The Mg(2+) site is built by Q299 and E312.

The protein belongs to the phosphohexose mutase family. Mg(2+) is required as a cofactor. Requires Mn(2+) as cofactor.

It carries out the reaction 5-amino-1-(5-phospho-beta-D-ribosyl)imidazole-4-carboxamide + formate + ATP = 5-formamido-1-(5-phospho-D-ribosyl)imidazole-4-carboxamide + ADP + phosphate. It functions in the pathway purine metabolism; IMP biosynthesis via de novo pathway; 5-formamido-1-(5-phospho-D-ribosyl)imidazole-4-carboxamide from 5-amino-1-(5-phospho-D-ribosyl)imidazole-4-carboxamide (formate route): step 1/1. Catalyzes the ATP- and formate-dependent formylation of 5-aminoimidazole-4-carboxamide-1-beta-d-ribofuranosyl 5'-monophosphate (AICAR) to 5-formaminoimidazole-4-carboxamide-1-beta-d-ribofuranosyl 5'-monophosphate (FAICAR) in the absence of folates. The chain is 5-formaminoimidazole-4-carboxamide-1-(beta)-D-ribofuranosyl 5'-monophosphate synthetase from Methanosphaera stadtmanae (strain ATCC 43021 / DSM 3091 / JCM 11832 / MCB-3).